We begin with the raw amino-acid sequence, 257 residues long: 5-oxoprolinase subunit A (257 aa).

The protein belongs to the LamB/PxpA family. In terms of assembly, forms a complex composed of PxpA, PxpB and PxpC.

The catalysed reaction is 5-oxo-L-proline + ATP + 2 H2O = L-glutamate + ADP + phosphate + H(+). In terms of biological role, catalyzes the cleavage of 5-oxoproline to form L-glutamate coupled to the hydrolysis of ATP to ADP and inorganic phosphate. The sequence is that of 5-oxoprolinase subunit A from Pectobacterium atrosepticum (strain SCRI 1043 / ATCC BAA-672) (Erwinia carotovora subsp. atroseptica).